The sequence spans 320 residues: ATP synthase gamma chain (320 aa).

Belongs to the ATPase gamma chain family. As to quaternary structure, F-type ATPases have 2 components, CF(1) - the catalytic core - and CF(0) - the membrane proton channel. CF(1) has five subunits: alpha(3), beta(3), gamma(1), delta(1), epsilon(1). CF(0) has three main subunits: a, b and c.

The protein localises to the cell membrane. Functionally, produces ATP from ADP in the presence of a proton gradient across the membrane. The gamma chain is believed to be important in regulating ATPase activity and the flow of protons through the CF(0) complex. The chain is ATP synthase gamma chain from Lactobacillus helveticus (strain DPC 4571).